The sequence spans 409 residues: Serine/threonine transporter SstT (409 aa).

Transmembrane regions (helical) follow at residues 14–34 (GSLVLQILVGIIAGIIVATLS), 48–68 (FVGALKAIAPILVFILVAASI), 82–102 (IVILYLFGTFAAAVTAVLMSF), 141–161 (ALMTGNYIGILAWGVGLGLAL), 192–212 (IGIFGLVSSTFASTGFSAIAG), 216–236 (LLLVLLGAMAIMALIINPAIV), 290–310 (IPLGATINMGGAAITITILTL), 322–342 (ILTAILLSVVAGISACGASGV), and 357–377 (FGISNDIAMQVVAVGFIIGVI).

The protein belongs to the dicarboxylate/amino acid:cation symporter (DAACS) (TC 2.A.23) family.

The protein resides in the cell inner membrane. The catalysed reaction is L-serine(in) + Na(+)(in) = L-serine(out) + Na(+)(out). It carries out the reaction L-threonine(in) + Na(+)(in) = L-threonine(out) + Na(+)(out). Involved in the import of serine and threonine into the cell, with the concomitant import of sodium (symport system). This Shewanella woodyi (strain ATCC 51908 / MS32) protein is Serine/threonine transporter SstT.